Reading from the N-terminus, the 227-residue chain is Cysteine-rich hydrophobic domain-containing protein 1 (227 aa).

Residues 1–84 (MSILLPNMAE…PPRVVSEEHL (84 aa)) form a disordered region. Acidic residues predominate over residues 13-23 (TISELEEEEEA). Positions 24-44 (ATSSSSPSSSPSSSSSSSVSG) are enriched in low complexity. The segment covering 45–72 (PDEDEEDEEEEEEEDEEEEDEEEEEEEV) has biased composition (acidic residues). Residues 46-73 (DEDEEDEEEEEEEDEEEEDEEEEEEEVP) adopt a coiled-coil conformation.

It belongs to the CHIC family. In terms of processing, palmitoylated. In terms of tissue distribution, expressed moderately in the brain.

Its subcellular location is the cell membrane. It localises to the cytoplasmic vesicle. The polypeptide is Cysteine-rich hydrophobic domain-containing protein 1 (Chic1) (Mus musculus (Mouse)).